Here is a 524-residue protein sequence, read N- to C-terminus: MDTSLFSLFVPILVFVFIALFKKSKKPKYVKAPAPSGAWPIIGHLHLLGGKEQLLYRTLGKMADHYGPAMSLQLGSNEAFVVSSFEVAKDCFTVNDKALASRPMTAAAKHMGYNFAVFGFAPYSAFWREMRKIATIELLSNRRLQMLKHVRVSEITMGVKDLYSLWFKNGGTKPVMVDLKSWLEDMTLNMIVRMVAGKRYFGGGGSVSSEDTEEAMQCKKAIAKFFHLIGIFTVSDAFPTLSFFDLQGHEKEMKQTGSELDVILERWIENHRQQRKFSGTKENDSDFIDVMMSLAEQGKLSHLQYDANTSIKSTCLALILGGSDTSASTLTWAISLLLNNKEMLKKAQDEIDIHVGRDRNVEDSDIENLVYLQAIIKETLRLYPAGPLLGPREAMEDCTVAGYYVPCGTRLIVNVWKIQRDPKVYMEPNEFRPERFITGEAKEFDVRGQNFELMPFGSGRRSCPGSSLAMQVLHLGLARFLHSFDVKTVMDMPVDMSENPGLTIPKATPLEVLISPRIKEELFV.

Residues 1–21 (MDTSLFSLFVPILVFVFIALF) traverse the membrane as a helical segment. Cys-463 provides a ligand contact to heme.

Belongs to the cytochrome P450 family. Heme serves as cofactor. In terms of tissue distribution, expressed in both primary and lateral roots under iron-deficient conditions, except in apical root zones, and mostly in the root epidermal layer.

The protein localises to the membrane. The enzyme catalyses fraxetin + reduced [NADPH--hemoprotein reductase] + O2 = sideretin (reduced form) + oxidized [NADPH--hemoprotein reductase] + H2O + H(+). It carries out the reaction xanthotoxin + reduced [NADPH--hemoprotein reductase] + O2 = 5-hydroxyxanthotoxin + oxidized [NADPH--hemoprotein reductase] + H2O + 2 H(+). It functions in the pathway phenylpropanoid metabolism. In terms of biological role, can hydroxylate xanthotoxin (8-methoxypsoralen) to form 5-hydroxyxanthotoxin (5-hydroxy-8-methoxypsoralen) in vivo and in vitro. Involved in the early iron deficiency response, possibly through an IDE1-like mediated pathway. Involved in the pathway of sideretin biosynthesis from feruloyl CoA, a redox-active catecholic metabolite exuded by roots in response to iron deficiency in order to facilitate the uptake of iron; this pathway consists in the successive conversion from feruloyl CoA to scopoletin, from scopoletin to fraxetin and from fraxetin to sideretin. Catalyzes the biosynthesis of sideretin via fraxetin hydroxylation. This is Xanthotoxin 5-hydroxylase CYP82C4 from Arabidopsis thaliana (Mouse-ear cress).